Here is a 341-residue protein sequence, read N- to C-terminus: L-threonine 3-dehydrogenase (341 aa).

Cys-38 is a binding site for Zn(2+). Residues Thr-40 and His-43 each act as charge relay system in the active site. Positions 63, 64, 93, 96, 99, and 107 each coordinate Zn(2+). Residues Ile-175, Asp-195, Arg-200, 262–264, and 286–287 contribute to the NAD(+) site; these read LGI and IY.

It belongs to the zinc-containing alcohol dehydrogenase family. As to quaternary structure, homotetramer. The cofactor is Zn(2+).

The protein localises to the cytoplasm. The enzyme catalyses L-threonine + NAD(+) = (2S)-2-amino-3-oxobutanoate + NADH + H(+). Its pathway is amino-acid degradation; L-threonine degradation via oxydo-reductase pathway; glycine from L-threonine: step 1/2. In terms of biological role, catalyzes the NAD(+)-dependent oxidation of L-threonine to 2-amino-3-ketobutyrate. This Salmonella gallinarum (strain 287/91 / NCTC 13346) protein is L-threonine 3-dehydrogenase.